The primary structure comprises 93 residues: Integration host factor subunit beta (93 aa).

The protein belongs to the bacterial histone-like protein family. Heterodimer of an alpha and a beta chain.

In terms of biological role, this protein is one of the two subunits of integration host factor, a specific DNA-binding protein that functions in genetic recombination as well as in transcriptional and translational control. The sequence is that of Integration host factor subunit beta from Haemophilus ducreyi (strain 35000HP / ATCC 700724).